The primary structure comprises 444 residues: RING finger and transmembrane domain-containing protein 2 (444 aa).

Topologically, residues 1-181 are extracellular; it reads MWLFTVNQVL…ILLAKLCFQH (181 aa). Disordered stretches follow at residues 13–41 and 92–149; these read MQRR…ASVD and PASR…PGTP. Residues 107–121 show a composition bias toward basic residues; it reads YHHRQPHHHFHHGGH. Residues 131–140 are compositionally biased toward basic and acidic residues; that stretch reads GGDHRGHSEE. A helical transmembrane segment spans residues 182–202; that stretch reads KLGIAVCIGMASTFAYANSTL. The Cytoplasmic portion of the chain corresponds to 203 to 214; it reads REQVSLKEKRSV. The chain crosses the membrane as a helical span at residues 215–235; it reads LVILWILAFLAGNTLYVLYTF. Topologically, residues 236–255 are extracellular; that stretch reads SSQQLYNSLIFLKPNLETLD. The chain crosses the membrane as a helical span at residues 256–276; the sequence is FFDLLWIVGIADFVLKYITIA. Topologically, residues 277–329 are cytoplasmic; the sequence is LKCLIVALPKIILAVKSKGKFYLVIEELSQLFRSLVPIQLWYKYIMGDDSSNS. A helical membrane pass occupies residues 330-350; sequence YFLGGVLIVLYSLCKSFDICG. Residues 351-444 lie on the Extracellular side of the membrane; sequence RVGGVRKALK…GATSAHFQVY (94 aa). Residues 384–422 form an RING-type; degenerate zinc finger; the sequence is CAICQAEFREPLILLCQHVFCEECLCLWLDRERTCPLSR.

The protein localises to the membrane. E3 ubiquitin-protein ligase that negatively regulates IL3-dependent cellular responses through IL3RA ubiquitination and degradation by the proteasome, having an anti-inflammatory effect. This chain is RING finger and transmembrane domain-containing protein 2 (RNFT2), found in Pongo abelii (Sumatran orangutan).